The chain runs to 1227 residues: Pentatricopeptide repeat-containing protein At5g15280, mitochondrial (1227 aa).

A mitochondrion-targeting transit peptide spans methionine 1–phenylalanine 31. 28 PPR repeats span residues leucine 146 to methionine 180, asparagine 182 to proline 216, leucine 217 to leucine 251, asparagine 255 to leucine 289, asparagine 290 to glutamate 320, aspartate 322 to glutamine 356, aspartate 357 to proline 391, aspartate 392 to leucine 426, serine 427 to glutamate 461, valine 527 to leucine 561, serine 562 to leucine 597, aspartate 598 to isoleucine 632, aspartate 633 to proline 667, aspartate 668 to serine 698, glutamine 703 to valine 737, glutamate 738 to proline 772, serine 773 to isoleucine 800, serine 802 to serine 836, tyrosine 837 to cysteine 871, serine 872 to proline 906, glycine 908 to proline 942, aspartate 943 to proline 977, asparagine 978 to leucine 1012, serine 1014 to asparagine 1044, methionine 1047 to proline 1081, glycine 1082 to proline 1116, serine 1117 to proline 1151, and serine 1152 to valine 1186.

It belongs to the PPR family. P subfamily.

The protein resides in the mitochondrion. The polypeptide is Pentatricopeptide repeat-containing protein At5g15280, mitochondrial (Arabidopsis thaliana (Mouse-ear cress)).